The primary structure comprises 549 residues: Probable acyl-activating enzyme 10 (549 aa).

Belongs to the ATP-dependent AMP-binding enzyme family. In terms of tissue distribution, expressed at low levels in roots.

May act as an acid--thiol ligase that activates carboxylic acids by forming acyl-CoAs. This chain is Probable acyl-activating enzyme 10 (AEE10), found in Arabidopsis thaliana (Mouse-ear cress).